A 152-amino-acid chain; its full sequence is Small ribosomal subunit protein uS13A (152 aa).

Belongs to the universal ribosomal protein uS13 family. Component of the small ribosomal subunit (SSU). Mature yeast ribosomes consist of a small (40S) and a large (60S) subunit. The 40S small subunit contains 1 molecule of ribosomal RNA (18S rRNA) and at least 33 different proteins. The large 60S subunit contains 3 rRNA molecules (25S, 5.8S and 5S rRNA) and at least 46 different proteins.

Its subcellular location is the cytoplasm. Functionally, component of the ribosome, a large ribonucleoprotein complex responsible for the synthesis of proteins in the cell. The small ribosomal subunit (SSU) binds messenger RNAs (mRNAs) and translates the encoded message by selecting cognate aminoacyl-transfer RNA (tRNA) molecules. The large subunit (LSU) contains the ribosomal catalytic site termed the peptidyl transferase center (PTC), which catalyzes the formation of peptide bonds, thereby polymerizing the amino acids delivered by tRNAs into a polypeptide chain. The nascent polypeptides leave the ribosome through a tunnel in the LSU and interact with protein factors that function in enzymatic processing, targeting, and the membrane insertion of nascent chains at the exit of the ribosomal tunnel. The polypeptide is Small ribosomal subunit protein uS13A (rps1801) (Schizosaccharomyces pombe (strain 972 / ATCC 24843) (Fission yeast)).